We begin with the raw amino-acid sequence, 683 residues long: Stromal interaction molecule 1 (683 aa).

The N-terminal stretch at 1 to 22 is a signal peptide; that stretch reads MDVCARLALWLLWGLLLHHGQS. The Extracellular portion of the chain corresponds to 23 to 211; it reads LSQSHSEKAT…LLTRHNHLKD (189 aa). 2 EF-hand domains span residues 62–95 and 100–124; these read SFDAVRSIHKLMDDDANGDVDVEESDEFLREDLN and TVKHSTFHGEDKLISVEDLWKAWKS. Asp-74, Asp-76, Asn-78, Asp-80, and Glu-85 together coordinate Ca(2+). N-linked (GlcNAc...) asparagine glycosylation is found at Asn-129 and Asn-169. Residues 130-198 form the SAM domain; sequence WTVDEVVQWL…QLKALDTVLF (69 aa). The helical transmembrane segment at 212 to 232 threads the bilayer; sequence FMLVVSIVIGVGGCWFAYIQN. Residues 233–683 lie on the Cytoplasmic side of the membrane; the sequence is RYSKEHMKKM…LKIFKKPLKK (451 aa). The stretch at 246 to 440 forms a coiled coil; sequence LEGLHRAEQS…IEILCGFQIV (195 aa). Ser-255 carries the phosphoserine modification. Residues 342-440 form an SOAR/CAD region; sequence PEALQKWLQL…IEILCGFQIV (99 aa). The contributes to fast Ca(2+)-dependent inactivation of CRAC channels stretch occupies residues 473-481; sequence DDVDDMDEE. The span at 488 to 497 shows a compositional bias: low complexity; that stretch reads MQSPSLQSSV. Positions 488–535 are disordered; that stretch reads MQSPSLQSSVRQRLTEPQHGLGSQRDLTHSDSESSLHMSDRQRLAPKP. Position 502 is a phosphothreonine (Thr-502). Position 510 is a phosphoserine (Ser-510). Basic and acidic residues predominate over residues 513-530; sequence DLTHSDSESSLHMSDRQR. Phosphothreonine is present on Thr-515. Phosphoserine occurs at positions 517, 519, 521, 522, 565, 573, 606, 616, and 626. The disordered stretch occupies residues 597–683; that stretch reads LSSPALPSGS…LKIFKKPLKK (87 aa). Residues 640–643 carry the Microtubule tip localization signal motif; sequence TRIP. Acidic residues predominate over residues 653 to 664; sequence EEDNGSIGEETD. Ser-658 carries the phosphoserine modification. Thr-663 carries the post-translational modification Phosphothreonine. Ser-666 is subject to Phosphoserine. Positions 668–683 are enriched in basic residues; the sequence is GRKKFPLKIFKKPLKK. The tract at residues 670 to 683 is required for generation of inwardly rectifying CRAC currents; it reads KKFPLKIFKKPLKK.

Monomer in the presence of Ca(2+). It oligomerizes in absence of Ca(2+). Forms homooligomers and heterooligomers with STIM2. Interacts with pore-forming subunits of CRAC channels, ORAI1, ORAI2 and ORAI3; this interaction is potentiated upon Ca(2+) store depletion. Interacts (via the transmembrane region and the SOAR/CAD domain) with SPPL3; the interaction promotes the binding of STIM1 to ORAI1. Interacts with ORAI1. Interacts with MAPRE1; probably required for targeting to the growing microtubule plus ends. Interacts with CRACR2A/EFCAB4B; the interaction is direct and takes place in absence of Ca(2+). Forms a complex with CRACR2A/EFCAB4B and ORAI1 at low concentration of Ca(2+), the complex dissociates at elevated Ca(2+) concentrations. Interacts with SARAF, promoting a slow inactivation of STIM1-dependent SOCE activity, possibly by facilitating the deoligomerization of STIM1. Interacts with EFHB; the interaction takes place upon Ca(2+)-store depletion and inhibits the association with SARAF. Interacts with ASPH. Interacts with SLC35G1; intracellular Ca(2+)-dependent. May interact with ATP1A1, ATP2A2, ATP2B1, ATP2B4, KPNB1 and XPO1; through SLC35G1. Interacts with TMEM203. Interacts with STIMATE, promoting STIM1 conformational switch. Interacts with TMEM178A. Interacts with CASQ1 (via C-terminal end and preferentially with the monomeric form); this interaction increases in response to a depletion of intracellular calcium, decreases both STIM1 aggregation and clustering, interaction of STIM1 with ORAI1 and store-operated Ca(2+) entry (SOCE) activity. Glycosylation is required for cell surface expression. Post-translationally, phosphorylated predominantly on Ser residues.

It is found in the cell membrane. Its subcellular location is the endoplasmic reticulum membrane. The protein localises to the sarcoplasmic reticulum. It localises to the cytoplasm. The protein resides in the cytoskeleton. In terms of biological role, acts as a Ca(2+) sensor that gates two major inward rectifying Ca(2+) channels at the plasma membrane: Ca(2+) release-activated Ca(2+) (CRAC) channels and arachidonate-regulated Ca(2+)-selective (ARC) channels. Plays a role in mediating store-operated Ca(2+) entry (SOCE), a Ca(2+) influx following depletion of intracellular Ca(2+) stores. Upon Ca(2+) depletion, translocates from the endoplasmic reticulum to the plasma membrane where it activates CRAC channel pore-forming subunits ORA1, ORA2 and ORAI3 to generate sustained and oscillatory Ca(2+) entry. Involved in enamel formation. The chain is Stromal interaction molecule 1 (STIM1) from Bos taurus (Bovine).